Consider the following 80-residue polypeptide: Exodeoxyribonuclease 7 small subunit (80 aa).

The protein belongs to the XseB family. As to quaternary structure, heterooligomer composed of large and small subunits.

Its subcellular location is the cytoplasm. It catalyses the reaction Exonucleolytic cleavage in either 5'- to 3'- or 3'- to 5'-direction to yield nucleoside 5'-phosphates.. Its function is as follows. Bidirectionally degrades single-stranded DNA into large acid-insoluble oligonucleotides, which are then degraded further into small acid-soluble oligonucleotides. This chain is Exodeoxyribonuclease 7 small subunit, found in Enterobacter sp. (strain 638).